Reading from the N-terminus, the 147-residue chain is Hemoglobin subunit delta (147 aa).

Positions 3–147 (HLTADETALV…VANALAHKYH (145 aa)) constitute a Globin domain. Residue S51 is modified to Phosphoserine. Heme b contacts are provided by H64 and H93.

The protein belongs to the globin family. As to quaternary structure, heterotetramer of two delta chains and two alpha chains. Red blood cells.

The chain is Hemoglobin subunit delta (HBD) from Dugong dugon (Dugong).